Consider the following 436-residue polypeptide: Trigger factor (436 aa).

Residues 163 to 248 (GDRVTIDFEG…VKKIEAAHLP (86 aa)) form the PPIase FKBP-type domain.

This sequence belongs to the FKBP-type PPIase family. Tig subfamily.

Its subcellular location is the cytoplasm. It carries out the reaction [protein]-peptidylproline (omega=180) = [protein]-peptidylproline (omega=0). In terms of biological role, involved in protein export. Acts as a chaperone by maintaining the newly synthesized protein in an open conformation. Functions as a peptidyl-prolyl cis-trans isomerase. This chain is Trigger factor, found in Polaromonas naphthalenivorans (strain CJ2).